The sequence spans 430 residues: Zinc carboxypeptidase A 1 (430 aa).

Residues 1–22 (MSLNKCLLFALLAIVASASVSA) form the signal peptide. Positions 124 to 423 (QYYELDDTYA…DSIVAMATEV (300 aa)) constitute a Peptidase M14 domain. Zn(2+) is bound by residues H187 and E190. Cysteines 252 and 275 form a disulfide. Position 311 (H311) interacts with Zn(2+). The active-site Proton donor/acceptor is E386.

It belongs to the peptidase M14 family. Requires Zn(2+) as cofactor.

The protein localises to the secreted. This Drosophila melanogaster (Fruit fly) protein is Zinc carboxypeptidase A 1.